Here is a 384-residue protein sequence, read N- to C-terminus: MNMLVVENGTILRGPELTPQRKNLVIEDGIIKEITDERAPSGERIDASKLMVCPALVNSHVHIGDSVALDVGDGRPLEDIVRPPNGLKHRILESSPPGMLMEAMRNSARDMITHGIGSFIDYREGGPEGVELLREAIGDLPISGIILGRDPVVFDQEASRAEIRRRVRGVLRVSDGFAPSGMGEITDETASIIVEECERAGKIASIHVAEHRESQRRSLEDTGMSEVERALNAGFKLLVHLTNPVREDLKLVRESGASVVLCPRSNGALSSGIPPIRRMHELGINLLLGTDNLMFNSPDMLREMEYTLKVTRGCARRYFPPVEVLRMATSNTSAFTGTGVIEEGFPADLILVEKLSGDPYLSIINRTESKNIIYLIIKGKLVKR.

Residues His-60, His-62, His-207, and Asp-291 each contribute to the Zn(2+) site.

Belongs to the metallo-dependent hydrolases superfamily. ATZ/TRZ family.

The chain is Putative aminohydrolase MTH_994 from Methanothermobacter thermautotrophicus (strain ATCC 29096 / DSM 1053 / JCM 10044 / NBRC 100330 / Delta H) (Methanobacterium thermoautotrophicum).